The sequence spans 401 residues: E3 ubiquitin-protein ligase DA2 (401 aa).

Residues cysteine 59 to lysine 102 form an RING-type; degenerate zinc finger. Positions lysine 139–glutamate 153 are enriched in basic and acidic residues. The segment at lysine 139–glycine 164 is disordered.

Interacts with DA1 (via C-terminus).

The enzyme catalyses S-ubiquitinyl-[E2 ubiquitin-conjugating enzyme]-L-cysteine + [acceptor protein]-L-lysine = [E2 ubiquitin-conjugating enzyme]-L-cysteine + N(6)-ubiquitinyl-[acceptor protein]-L-lysine.. The protein operates within protein modification; protein ubiquitination. In terms of biological role, E3 ubiquitin-protein ligase involved in the regulation of organ and seed size. Acts synergistically with DA1 to regulate seed size. Functions synergistically with DA1 to restrict cell proliferation in the maternal integuments of ovules and developing seeds. Seems to function independently of BB. Possesses E3 ubiquitin-protein ligase activity in vitro. Polyubiquitinates DA1, DAR1 and DAR2, but not DAR3. This chain is E3 ubiquitin-protein ligase DA2, found in Arabidopsis thaliana (Mouse-ear cress).